Consider the following 111-residue polypeptide: Large ribosomal subunit protein P2 (111 aa).

The interval 62–111 (LASVPSGGAGGAAAAGGAAAAGGAAEAAPEEAKEEEKEESDDDMGFGLFD) is disordered. Positions 76-88 (AGGAAAAGGAAEA) are enriched in low complexity. Serine 101 is subject to Phosphoserine.

This sequence belongs to the eukaryotic ribosomal protein P1/P2 family. P1 and P2 exist as dimers at the large ribosomal subunit.

Its function is as follows. Plays an important role in the elongation step of protein synthesis. This chain is Large ribosomal subunit protein P2, found in Podospora anserina (Pleurage anserina).